A 64-amino-acid chain; its full sequence is Large ribosomal subunit protein bL35 (64 aa).

This sequence belongs to the bacterial ribosomal protein bL35 family.

This is Large ribosomal subunit protein bL35 from Ectopseudomonas mendocina (strain ymp) (Pseudomonas mendocina).